An 824-amino-acid chain; its full sequence is Leucine--tRNA ligase (824 aa).

Residues 42–52 (PYPSGKIHMGH) carry the 'HIGH' region motif. Residues 581–585 (KMSKS) carry the 'KMSKS' region motif. Lys-584 is a binding site for ATP.

This sequence belongs to the class-I aminoacyl-tRNA synthetase family.

The protein localises to the cytoplasm. It carries out the reaction tRNA(Leu) + L-leucine + ATP = L-leucyl-tRNA(Leu) + AMP + diphosphate. This Citrifermentans bemidjiense (strain ATCC BAA-1014 / DSM 16622 / JCM 12645 / Bem) (Geobacter bemidjiensis) protein is Leucine--tRNA ligase.